Consider the following 397-residue polypeptide: CCA-adding enzyme (397 aa).

The ATP site is built by glycine 26 and arginine 29. 2 residues coordinate CTP: glycine 26 and arginine 29. 2 residues coordinate Mg(2+): aspartate 39 and aspartate 41. ATP contacts are provided by arginine 110, aspartate 153, arginine 156, arginine 159, and arginine 162. 5 residues coordinate CTP: arginine 110, aspartate 153, arginine 156, arginine 159, and arginine 162.

It belongs to the tRNA nucleotidyltransferase/poly(A) polymerase family. Bacterial CCA-adding enzyme type 3 subfamily. As to quaternary structure, homodimer. Mg(2+) is required as a cofactor.

The catalysed reaction is a tRNA precursor + 2 CTP + ATP = a tRNA with a 3' CCA end + 3 diphosphate. It catalyses the reaction a tRNA with a 3' CCA end + 2 CTP + ATP = a tRNA with a 3' CCACCA end + 3 diphosphate. Functionally, catalyzes the addition and repair of the essential 3'-terminal CCA sequence in tRNAs without using a nucleic acid template. Adds these three nucleotides in the order of C, C, and A to the tRNA nucleotide-73, using CTP and ATP as substrates and producing inorganic pyrophosphate. tRNA 3'-terminal CCA addition is required both for tRNA processing and repair. Also involved in tRNA surveillance by mediating tandem CCA addition to generate a CCACCA at the 3' terminus of unstable tRNAs. While stable tRNAs receive only 3'-terminal CCA, unstable tRNAs are marked with CCACCA and rapidly degraded. The chain is CCA-adding enzyme from Bacillus cereus (strain Q1).